Reading from the N-terminus, the 325-residue chain is Mitochondrial thiamine pyrophosphate carrier 1 (325 aa).

Solcar repeat units lie at residues 12-111, 122-209, and 216-312; these read GSRL…TTLL, PPSA…LRPH, and PFSS…ALKF. Transmembrane regions (helical) follow at residues 17–35, 92–108, 127–143, 184–200, 223–239, and 287–304; these read VTAA…IAPL, LLYV…YRTT, SFVA…AATY, VWDR…SFFF, VART…TFPL, and GLTV…VTMW.

It belongs to the mitochondrial carrier (TC 2.A.29) family.

It is found in the mitochondrion inner membrane. Mitochondrial transporter that mediates uptake of thiamine pyrophosphate (ThPP) into mitochondria. In Chaetomium globosum (strain ATCC 6205 / CBS 148.51 / DSM 1962 / NBRC 6347 / NRRL 1970) (Soil fungus), this protein is Mitochondrial thiamine pyrophosphate carrier 1 (TPC1).